The chain runs to 101 residues: Small ubiquitin-related modifier 5 (101 aa).

Residues 17–21 (IKDED) carry the Required for PML-NB formation motif. A Glycyl lysine isopeptide (Lys-Gly) (interchain with G-Cter in SUMO1P1/SUMO5) cross-link involves residue lysine 18. A Ubiquitin-like domain is found at 20-97 (EDIKLRVIGQ…IEVYQEQIGG (78 aa)). Residue glycine 97 forms a Glycyl lysine isopeptide (Gly-Lys) (interchain with K-? in acceptor proteins) linkage. Positions 98–101 (HSTV) are excised as a propeptide.

Belongs to the ubiquitin family. SUMO subfamily. Interacts with CBX4. Interacts with PIAS1. Found in a complex with SAE2. Interacts with UBE2I. Interacts with SP100. Interacts with HIPK2. Interacts with DAXX. Interacts with PML-RARA oncoprotein; PML-RARalpha outcompetes PML for SUMO1P1/SUMO5 conjugation. Cleavage of precursor form is necessary for function. In terms of processing, autosumoylated at Lys-18. As to expression, high expression levels in testes and peripheral blood leukocyte. Expressed also in lung, placenta, liver, spleen and thymus.

The protein resides in the nucleus. Ubiquitin-like protein that can be covalently attached to proteins as a monomer or as a lysine-linked polymer. Regulates the life cycle of promyelocytic leukemia nuclear bodies (PML-NBs). PolySUMO1P1/SUMO5 conjugation on 'Lys-160' of PML facilitates recruitment of PML-NB components, which enlarges PML-NB. SUMO1P1/SUMO5 also increases polySUMO2/3 conjugation of PML, resulting in RNF4-mediated disruption of PML-NBs. This chain is Small ubiquitin-related modifier 5, found in Homo sapiens (Human).